Consider the following 159-residue polypeptide: Globin CTT-W (159 aa).

The signal sequence occupies residues 1-16 (MKFLVILTLCIAGAIA). A Globin domain is found at 17–159 (HCDKAPFIKA…HHAIVYSILE (143 aa)). Positions 73 and 108 each coordinate heme b.

It belongs to the globin family.

This is Globin CTT-W (CTT-W) from Chironomus thummi thummi (Midge).